We begin with the raw amino-acid sequence, 101 residues long: Small ribosomal subunit protein uS10 (101 aa).

The protein belongs to the universal ribosomal protein uS10 family. As to quaternary structure, part of the 30S ribosomal subunit.

Its function is as follows. Involved in the binding of tRNA to the ribosomes. This is Small ribosomal subunit protein uS10 from Anaeromyxobacter dehalogenans (strain 2CP-C).